The primary structure comprises 182 residues: Isopentenyl-diphosphate Delta-isomerase (182 aa).

Residues His25 and His32 each coordinate Mn(2+). The Nudix hydrolase domain occupies 30–164 (LLHLAFSSWL…PWAFSPWMVM (135 aa)). Cys67 is a catalytic residue. His69 provides a ligand contact to Mn(2+). Glu87 serves as a coordination point for Mg(2+). Residues Glu114 and Glu116 each coordinate Mn(2+). Glu116 is a catalytic residue.

The protein belongs to the IPP isomerase type 1 family. As to quaternary structure, homodimer. The cofactor is Mg(2+). Requires Mn(2+) as cofactor.

The protein localises to the cytoplasm. The catalysed reaction is isopentenyl diphosphate = dimethylallyl diphosphate. Its pathway is isoprenoid biosynthesis; dimethylallyl diphosphate biosynthesis; dimethylallyl diphosphate from isopentenyl diphosphate: step 1/1. In terms of biological role, catalyzes the 1,3-allylic rearrangement of the homoallylic substrate isopentenyl (IPP) to its highly electrophilic allylic isomer, dimethylallyl diphosphate (DMAPP). The chain is Isopentenyl-diphosphate Delta-isomerase from Escherichia coli (strain ATCC 8739 / DSM 1576 / NBRC 3972 / NCIMB 8545 / WDCM 00012 / Crooks).